The chain runs to 107 residues: Phosphoribosyl-ATP pyrophosphatase (107 aa).

Belongs to the PRA-PH family.

It localises to the cytoplasm. The catalysed reaction is 1-(5-phospho-beta-D-ribosyl)-ATP + H2O = 1-(5-phospho-beta-D-ribosyl)-5'-AMP + diphosphate + H(+). The protein operates within amino-acid biosynthesis; L-histidine biosynthesis; L-histidine from 5-phospho-alpha-D-ribose 1-diphosphate: step 2/9. The chain is Phosphoribosyl-ATP pyrophosphatase from Neisseria gonorrhoeae (strain ATCC 700825 / FA 1090).